We begin with the raw amino-acid sequence, 316 residues long: Olfactory receptor 4N4 (316 aa).

Over 1 to 25 the chain is Extracellular; that stretch reads MKIANNTVVTEFILLGLTQSQDIQL. An N-linked (GlcNAc...) asparagine glycan is attached at N5. A helical transmembrane segment spans residues 26-49; sequence LVFVLILIFYLIILPGNFLIIFTI. The Cytoplasmic portion of the chain corresponds to 50–57; the sequence is RSDPGLTA. A helical transmembrane segment spans residues 58–79; it reads PLYLFLGNLAFLDASYSFIVAP. Residues 80–100 are Extracellular-facing; the sequence is RMLVDFLSEKKVISYRGCITQ. Cysteines 97 and 189 form a disulfide. The helical transmembrane segment at 101–120 threads the bilayer; it reads LFFLHFLGGGEGLLLVVMAF. At 121–139 the chain is on the cytoplasmic side; the sequence is DRYIAICRPLHCSTVMNPR. A helical transmembrane segment spans residues 140 to 158; it reads ACYAMMLALWLGGFVHSII. At 159–195 the chain is on the extracellular side; sequence QVVLILRLPFCGPNQLDNFFCDVRQVIKLACTDMFVV. The helical transmembrane segment at 196-219 threads the bilayer; it reads ELLMVFNSGLMTLLCFLGLLASYA. At 220–235 the chain is on the cytoplasmic side; sequence VILCHVRRAASEGKNK. A helical membrane pass occupies residues 236 to 258; the sequence is AMSTCTTRVIIILLMFGPAIFIY. Over 259-269 the chain is Extracellular; it reads MCPFRALPADK. Residues 270–289 form a helical membrane-spanning segment; it reads MVSLFHTVIFPLMNPMIYTL. The Cytoplasmic segment spans residues 290 to 316; that stretch reads RNQEVKTSMKRLLSRHVVCQVDFIIRN.

This sequence belongs to the G-protein coupled receptor 1 family.

It localises to the cell membrane. Odorant receptor. In Homo sapiens (Human), this protein is Olfactory receptor 4N4 (OR4N4).